We begin with the raw amino-acid sequence, 380 residues long: Cytochrome b (380 aa).

The next 4 membrane-spanning stretches (helical) occupy residues 34 to 54 (FGSL…FLAM), 78 to 99 (WLIR…YLHI), 114 to 134 (WNIG…GYVL), and 179 to 199 (FFTF…IHLL). Histidine 84 and histidine 98 together coordinate heme b. Heme b contacts are provided by histidine 183 and histidine 197. Residue histidine 202 participates in a ubiquinone binding. Transmembrane regions (helical) follow at residues 227–247 (YKDL…ALFT), 289–309 (LGGV…PILH), 321–341 (ITQI…WIGG), and 348–368 (FITI…ILFP).

Belongs to the cytochrome b family. As to quaternary structure, the cytochrome bc1 complex contains 3 respiratory subunits (MT-CYB, CYC1 and UQCRFS1), 2 core proteins (UQCRC1 and UQCRC2) and probably 6 low-molecular weight proteins. It depends on heme b as a cofactor.

The protein localises to the mitochondrion inner membrane. Component of the ubiquinol-cytochrome c reductase complex (complex III or cytochrome b-c1 complex) that is part of the mitochondrial respiratory chain. The b-c1 complex mediates electron transfer from ubiquinol to cytochrome c. Contributes to the generation of a proton gradient across the mitochondrial membrane that is then used for ATP synthesis. The chain is Cytochrome b (mt-cyb) from Hemitrygon laosensis (Mekong freshwater stingray).